A 501-amino-acid polypeptide reads, in one-letter code: Dipeptide and tripeptide permease A (501 aa).

At 1-21 the chain is on the cytoplasmic side; sequence MSTANKKPTESVSLNAFKQPK. A helical membrane pass occupies residues 22–44; it reads AFYLIFSIELWERFGYYGLQGIM. Over 45 to 59 the chain is Periplasmic; the sequence is AVYLVKQLGMSEADS. Residues 60–80 form a helical membrane-spanning segment; the sequence is ITLFSSFSALVYGLVAIGGWL. At 81-89 the chain is on the cytoplasmic side; it reads GDKILGTKR. The helical transmembrane segment at 90–110 threads the bilayer; sequence VIMLGAVVLAIGYALVAWSGH. Asp-111 is a topological domain (periplasmic). The chain crosses the membrane as a helical span at residues 112-132; that stretch reads AGIVYMGMAAIAVGNGLFKAN. Topologically, residues 133–153 are cytoplasmic; the sequence is PSSLLSTCYAKDDPRLDGAFT. A helical membrane pass occupies residues 154–174; that stretch reads MYYMSVNIGSFFSMLATPWLA. Over 175–178 the chain is Periplasmic; that stretch reads ARYG. A helical membrane pass occupies residues 179–199; the sequence is WSTAFALSVVGMLITVVNFAF. The Cytoplasmic portion of the chain corresponds to 200–219; the sequence is CQRWVKSYGSKPDFEPINFR. A helical membrane pass occupies residues 220 to 240; the sequence is NLLLTIVGIVVLIAVATWLLH. Residues 241-246 are Periplasmic-facing; it reads NQDIAR. Residues 247 to 267 form a helical membrane-spanning segment; the sequence is MVLGVIALGIVIIFGKEAFSM. Topologically, residues 268 to 274 are cytoplasmic; it reads HGAARRK. A helical membrane pass occupies residues 275-295; it reads MIVAFILMLQAIIFFVLYSQM. The Periplasmic portion of the chain corresponds to 296–320; sequence PTSLNFFAIRNVEHSILGIAFEPEQ. The chain crosses the membrane as a helical span at residues 321–341; the sequence is YQALNPFWIIIGSPILAAIYN. Topologically, residues 342–352 are cytoplasmic; that stretch reads RMGDTLPMPMK. The helical transmembrane segment at 353–373 threads the bilayer; that stretch reads FAIGMVLCSGAFLILPLGAKF. Residues 374–383 are Periplasmic-facing; sequence ANDAGIVSVN. A helical membrane pass occupies residues 384–404; that stretch reads WLIASYGLQSIGELMISGLGL. The Cytoplasmic segment spans residues 405 to 414; the sequence is AMVAQLVPQR. The chain crosses the membrane as a helical span at residues 415-435; that stretch reads LMGFIMGSWFLTTAGANIIGG. The Periplasmic segment spans residues 436–459; the sequence is YVANLMAVPSDVTDPLMSLEVYGR. A helical membrane pass occupies residues 460-480; the sequence is VFMQIGIATAVIAVLMLLTAP. Residues 481–501 are Cytoplasmic-facing; the sequence is KLNRMTQDDDTAEKGSKAATV.

The protein belongs to the major facilitator superfamily. Proton-dependent oligopeptide transporter (POT/PTR) (TC 2.A.17) family. DtpA subfamily.

It localises to the cell inner membrane. Its function is as follows. Proton-dependent permease that transports di- and tripeptides. The chain is Dipeptide and tripeptide permease A from Salmonella typhimurium (strain LT2 / SGSC1412 / ATCC 700720).